We begin with the raw amino-acid sequence, 704 residues long: Elongation factor G (704 aa).

The tr-type G domain occupies 10–290 (NKVRNIGIMA…AVVDFLPSPL (281 aa)). GTP-binding positions include 19 to 26 (AHIDAGKT), 83 to 87 (DTPGH), and 137 to 140 (NKMD). Residues 293–313 (PPMIGHDPRNEETEMTRKPST) are disordered. Residues 298-313 (HDPRNEETEMTRKPST) show a composition bias toward basic and acidic residues.

Belongs to the TRAFAC class translation factor GTPase superfamily. Classic translation factor GTPase family. EF-G/EF-2 subfamily.

The protein resides in the cytoplasm. Its function is as follows. Catalyzes the GTP-dependent ribosomal translocation step during translation elongation. During this step, the ribosome changes from the pre-translocational (PRE) to the post-translocational (POST) state as the newly formed A-site-bound peptidyl-tRNA and P-site-bound deacylated tRNA move to the P and E sites, respectively. Catalyzes the coordinated movement of the two tRNA molecules, the mRNA and conformational changes in the ribosome. This Renibacterium salmoninarum (strain ATCC 33209 / DSM 20767 / JCM 11484 / NBRC 15589 / NCIMB 2235) protein is Elongation factor G.